The following is a 611-amino-acid chain: DNA mismatch repair protein MutL (611 aa).

Belongs to the DNA mismatch repair MutL/HexB family.

Its function is as follows. This protein is involved in the repair of mismatches in DNA. It is required for dam-dependent methyl-directed DNA mismatch repair. May act as a 'molecular matchmaker', a protein that promotes the formation of a stable complex between two or more DNA-binding proteins in an ATP-dependent manner without itself being part of a final effector complex. In Borrelia garinii subsp. bavariensis (strain ATCC BAA-2496 / DSM 23469 / PBi) (Borreliella bavariensis), this protein is DNA mismatch repair protein MutL.